The primary structure comprises 205 residues: CD83 antigen (205 aa).

A signal peptide spans 1–19 (MSRGLQLLLLSCAYSLAPA). The region spanning 20–114 (TPEVKVACSE…YRCTLQDPDG (95 aa)) is the Ig-like V-type domain. Topologically, residues 20–144 (TPEVKVACSE…EETFKKYRAE (125 aa)) are extracellular. A disulfide bridge connects residues Cys-35 and Cys-107. The segment covering 60–69 (METPQEDHLR) has biased composition (basic and acidic residues). The tract at residues 60 to 81 (METPQEDHLRGQHYHQKGQNGS) is disordered. Residues Asn-79, Asn-96, and Asn-117 are each glycosylated (N-linked (GlcNAc...) asparagine). Residues 145–166 (IVLLLALVIFYLTLIIFTCKFA) traverse the membrane as a helical segment. Residues 167 to 205 (RLQSIFPDFSKAGMERAFLPVTSPNKHLGLVTPHKTELV) lie on the Cytoplasmic side of the membrane.

Monomer. Homodimer. Homotrimer. Interacts with MARCHF1; this interaction antagonizes MARCHF1-mediated MHC II and CD86 down-regulation. Glycosylated when expressed on activated dendritic cells. In terms of tissue distribution, expressed by activated lymphocytes, Langerhans cells and activatd dendritic cells.

It localises to the membrane. Functionally, transmembrane glycoprotein predominantly found on the surface of many immune cells including dendritic cells or lymphocytes that plays various roles in immune response regulation. Plays an essential role in CD4(+) T-selection, differentiation and stability by regulating the activity of the major E3 ubiquitin ligase responsible for controlling MHCII trafficking MARCHF8. Also inhibits MARCHF1 association with MHCII or CD86 to prevent their ubiquitination and subsequent degradation. In addition, acts as an important modulator of protective responses against acute infections. The protein is CD83 antigen (CD83) of Homo sapiens (Human).